The chain runs to 430 residues: Divergent protein kinase domain 2A (430 aa).

An N-terminal signal peptide occupies residues 1–35 (MWRLVPLKLGRLSRALKLAALGSLLVLMLLHSPSL).

It belongs to the DIPK family. Expressed in heart, brain, liver, spleen, kidney, lung, thymus, testis, ovary and muscle.

The protein resides in the golgi apparatus. Its subcellular location is the cytoplasmic vesicle. The protein localises to the COPI-coated vesicle. It localises to the secreted. Functionally, may play a role in cardiomyocyte proliferation through paracrine signaling and activation of the PI3-kinase signaling cascade. The polypeptide is Divergent protein kinase domain 2A (Dipk2a) (Mus musculus (Mouse)).